The sequence spans 114 residues: MGRIKTKITILLVLLLLLAGGYMYINDIELKDVPTAIGQTLSSEEEEYTIQEYKVTKIDGSEYHGVAENGTKIIFNGKKLNQDLSDIKEGDKIKAYFSKSKRIDGLIKVAKVND.

This is an uncharacterized protein from Bacillus subtilis (strain 168).